The sequence spans 371 residues: N-acetyldiaminopimelate deacetylase (371 aa).

Asp68 is an active-site residue. The active-site Proton acceptor is Glu127.

Belongs to the peptidase M20A family. N-acetyldiaminopimelate deacetylase subfamily.

It carries out the reaction N-acetyl-(2S,6S)-2,6-diaminopimelate + H2O = (2S,6S)-2,6-diaminopimelate + acetate. The protein operates within amino-acid biosynthesis; L-lysine biosynthesis via DAP pathway; LL-2,6-diaminopimelate from (S)-tetrahydrodipicolinate (acetylase route): step 3/3. Functionally, catalyzes the conversion of N-acetyl-diaminopimelate to diaminopimelate and acetate. The sequence is that of N-acetyldiaminopimelate deacetylase from Listeria welshimeri serovar 6b (strain ATCC 35897 / DSM 20650 / CCUG 15529 / CIP 8149 / NCTC 11857 / SLCC 5334 / V8).